The chain runs to 587 residues: Arginine--tRNA ligase (587 aa).

The 'HIGH' region motif lies at 127–137 (PNLAKEMHVGH).

This sequence belongs to the class-I aminoacyl-tRNA synthetase family. Monomer.

The protein localises to the cytoplasm. It carries out the reaction tRNA(Arg) + L-arginine + ATP = L-arginyl-tRNA(Arg) + AMP + diphosphate. This Pseudomonas aeruginosa (strain UCBPP-PA14) protein is Arginine--tRNA ligase.